The chain runs to 602 residues: Aspartate--tRNA(Asp/Asn) ligase (602 aa).

Glu176 contributes to the L-aspartate binding site. Residues 200–203 are aspartate; it reads QQFK. Positions 222 and 452 each coordinate L-aspartate. An ATP-binding site is contributed by 222 to 224; the sequence is RDE. An ATP-binding site is contributed by Glu490. Arg497 lines the L-aspartate pocket. 542–545 is a binding site for ATP; sequence GIDR.

Belongs to the class-II aminoacyl-tRNA synthetase family. Type 1 subfamily. Homodimer.

It is found in the cytoplasm. The enzyme catalyses tRNA(Asx) + L-aspartate + ATP = L-aspartyl-tRNA(Asx) + AMP + diphosphate. In terms of biological role, aspartyl-tRNA synthetase with relaxed tRNA specificity since it is able to aspartylate not only its cognate tRNA(Asp) but also tRNA(Asn). Reaction proceeds in two steps: L-aspartate is first activated by ATP to form Asp-AMP and then transferred to the acceptor end of tRNA(Asp/Asn). The protein is Aspartate--tRNA(Asp/Asn) ligase of Rickettsia conorii (strain ATCC VR-613 / Malish 7).